The chain runs to 98 residues: NADH-ubiquinone oxidoreductase chain 4L (98 aa).

Helical transmembrane passes span Met-1 to Met-21, Ala-29 to Leu-49, and Ile-61 to Val-81.

It belongs to the complex I subunit 4L family. Core subunit of respiratory chain NADH dehydrogenase (Complex I) which is composed of 45 different subunits.

It is found in the mitochondrion inner membrane. The enzyme catalyses a ubiquinone + NADH + 5 H(+)(in) = a ubiquinol + NAD(+) + 4 H(+)(out). Functionally, core subunit of the mitochondrial membrane respiratory chain NADH dehydrogenase (Complex I) which catalyzes electron transfer from NADH through the respiratory chain, using ubiquinone as an electron acceptor. Part of the enzyme membrane arm which is embedded in the lipid bilayer and involved in proton translocation. The chain is NADH-ubiquinone oxidoreductase chain 4L (MT-ND4L) from Balaenoptera omurai (Omura's baleen whale).